Here is a 186-residue protein sequence, read N- to C-terminus: Small ribosomal subunit protein uS4 (186 aa).

Residues 106 to 170 enclose the S4 RNA-binding domain; sequence RRLQTIVYRK…SPLKDEDHPI (65 aa). The interval 151 to 186 is disordered; the sequence is EEEEVDYSPYSPLKDEDHPIRCEARGESPEETAAEE. Residues 163–178 show a composition bias toward basic and acidic residues; the sequence is LKDEDHPIRCEARGES.

This sequence belongs to the universal ribosomal protein uS4 family. As to quaternary structure, part of the 30S ribosomal subunit. Contacts protein S5. The interaction surface between S4 and S5 is involved in control of translational fidelity.

Its function is as follows. One of the primary rRNA binding proteins, it binds directly to 16S rRNA where it nucleates assembly of the body of the 30S subunit. With S5 and S12 plays an important role in translational accuracy. The sequence is that of Small ribosomal subunit protein uS4 from Methanopyrus kandleri (strain AV19 / DSM 6324 / JCM 9639 / NBRC 100938).